The sequence spans 309 residues: Coenzyme PQQ synthesis protein B (309 aa).

This sequence belongs to the PqqB family.

It functions in the pathway cofactor biosynthesis; pyrroloquinoline quinone biosynthesis. May be involved in the transport of PQQ or its precursor to the periplasm. The protein is Coenzyme PQQ synthesis protein B of Nitrosococcus oceani (strain ATCC 19707 / BCRC 17464 / JCM 30415 / NCIMB 11848 / C-107).